Reading from the N-terminus, the 494-residue chain is Guanosine-5'-triphosphate,3'-diphosphate pyrophosphatase (494 aa).

The protein belongs to the GppA/Ppx family. GppA subfamily.

The enzyme catalyses guanosine 3'-diphosphate 5'-triphosphate + H2O = guanosine 3',5'-bis(diphosphate) + phosphate + H(+). The protein operates within purine metabolism; ppGpp biosynthesis; ppGpp from GTP: step 2/2. Catalyzes the conversion of pppGpp to ppGpp. Guanosine pentaphosphate (pppGpp) is a cytoplasmic signaling molecule which together with ppGpp controls the 'stringent response', an adaptive process that allows bacteria to respond to amino acid starvation, resulting in the coordinated regulation of numerous cellular activities. This is Guanosine-5'-triphosphate,3'-diphosphate pyrophosphatase from Shigella flexneri serotype 5b (strain 8401).